Consider the following 459-residue polypeptide: Ribulose bisphosphate carboxylase large chain (459 aa).

Positions 1–2 (MS) are excised as a propeptide. An N-acetylproline modification is found at P3. K14 carries the post-translational modification N6,N6,N6-trimethyllysine. Substrate contacts are provided by X123 and T173. K175 serves as the catalytic Proton acceptor. A substrate-binding site is contributed by K177. Mg(2+) is bound by residues K201, D203, and E204. K201 carries the N6-carboxylysine modification. H294 (proton acceptor) is an active-site residue. Substrate contacts are provided by R295, H327, and S379.

It belongs to the RuBisCO large chain family. Type I subfamily. In terms of assembly, heterohexadecamer of 8 large chains and 8 small chains; disulfide-linked. The disulfide link is formed within the large subunit homodimers. The cofactor is Mg(2+). In terms of processing, the disulfide bond which can form in the large chain dimeric partners within the hexadecamer appears to be associated with oxidative stress and protein turnover.

The protein localises to the plastid. It is found in the chloroplast. The enzyme catalyses 2 (2R)-3-phosphoglycerate + 2 H(+) = D-ribulose 1,5-bisphosphate + CO2 + H2O. It catalyses the reaction D-ribulose 1,5-bisphosphate + O2 = 2-phosphoglycolate + (2R)-3-phosphoglycerate + 2 H(+). In terms of biological role, ruBisCO catalyzes two reactions: the carboxylation of D-ribulose 1,5-bisphosphate, the primary event in carbon dioxide fixation, as well as the oxidative fragmentation of the pentose substrate in the photorespiration process. Both reactions occur simultaneously and in competition at the same active site. This chain is Ribulose bisphosphate carboxylase large chain, found in Corynocarpus laevigatus (New Zealand laurel).